The following is a 392-amino-acid chain: Arogenate dehydratase/prephenate dehydratase 1, chloroplastic (392 aa).

A chloroplast-targeting transit peptide spans 1-48 (MALRCFPIWVCPQTTHHRSPLMGLAEFDADKRRRFCLWECSSSASQRA). The Prephenate dehydratase domain maps to 107 to 282 (RISFQGIPGA…NVTRFLILAR (176 aa)). One can recognise an ACT domain in the interval 296–387 (SIVFSLEEGP…SFIRILGCYP (92 aa)).

As to expression, expressed in roots, leaves, stems, flowers and siliques.

It localises to the plastid. It is found in the chloroplast stroma. The catalysed reaction is L-arogenate + H(+) = L-phenylalanine + CO2 + H2O. It carries out the reaction prephenate + H(+) = 3-phenylpyruvate + CO2 + H2O. The protein operates within amino-acid biosynthesis; L-phenylalanine biosynthesis; L-phenylalanine from L-arogenate: step 1/1. Its pathway is amino-acid biosynthesis; L-phenylalanine biosynthesis; phenylpyruvate from prephenate: step 1/1. In terms of biological role, converts the prephenate produced from the shikimate-chorismate pathway into phenylalanine. Dehydratase that uses arogenate and prephenate as substrates. Utilzes more efficiently arogenate than prephenate. This chain is Arogenate dehydratase/prephenate dehydratase 1, chloroplastic, found in Arabidopsis thaliana (Mouse-ear cress).